Consider the following 355-residue polypeptide: Uroporphyrinogen decarboxylase (355 aa).

Substrate contacts are provided by residues 23–27, D72, Y148, S203, and H321; that span reads RQAGR.

It belongs to the uroporphyrinogen decarboxylase family. In terms of assembly, homodimer.

Its subcellular location is the cytoplasm. The enzyme catalyses uroporphyrinogen III + 4 H(+) = coproporphyrinogen III + 4 CO2. It functions in the pathway porphyrin-containing compound metabolism; protoporphyrin-IX biosynthesis; coproporphyrinogen-III from 5-aminolevulinate: step 4/4. Catalyzes the decarboxylation of four acetate groups of uroporphyrinogen-III to yield coproporphyrinogen-III. The sequence is that of Uroporphyrinogen decarboxylase from Chloroflexus aurantiacus (strain ATCC 29366 / DSM 635 / J-10-fl).